The following is a 94-amino-acid chain: Pyrimidine/purine nucleoside phosphorylase (94 aa).

It belongs to the nucleoside phosphorylase PpnP family.

The enzyme catalyses a purine D-ribonucleoside + phosphate = a purine nucleobase + alpha-D-ribose 1-phosphate. It carries out the reaction adenosine + phosphate = alpha-D-ribose 1-phosphate + adenine. It catalyses the reaction cytidine + phosphate = cytosine + alpha-D-ribose 1-phosphate. The catalysed reaction is guanosine + phosphate = alpha-D-ribose 1-phosphate + guanine. The enzyme catalyses inosine + phosphate = alpha-D-ribose 1-phosphate + hypoxanthine. It carries out the reaction thymidine + phosphate = 2-deoxy-alpha-D-ribose 1-phosphate + thymine. It catalyses the reaction uridine + phosphate = alpha-D-ribose 1-phosphate + uracil. The catalysed reaction is xanthosine + phosphate = alpha-D-ribose 1-phosphate + xanthine. Its function is as follows. Catalyzes the phosphorolysis of diverse nucleosides, yielding D-ribose 1-phosphate and the respective free bases. Can use uridine, adenosine, guanosine, cytidine, thymidine, inosine and xanthosine as substrates. Also catalyzes the reverse reactions. This is Pyrimidine/purine nucleoside phosphorylase from Pseudomonas putida (strain GB-1).